Reading from the N-terminus, the 328-residue chain is Flagellar motor switch protein FliM (328 aa).

The segment at 1-45 (MSDVLSQEEINQLIEALMKGELKEEDLLKEEEEKKVKPYDFKRPS) is interaction with unphosphorylated CheY.

This sequence belongs to the FliM family. As to quaternary structure, interacts (via N-terminus) with unphosphorylated CheY. Interacts (via central domain) with FliG (via central domain or via central domain and C-terminus).

Its subcellular location is the cell inner membrane. It localises to the bacterial flagellum basal body. FliM is one of three proteins (FliG, FliN, FliM) that forms the rotor-mounted switch complex (C ring), located at the base of the basal body. This complex interacts with the CheY and CheX chemotaxis proteins, in addition to contacting components of the motor that determine the direction of flagellar rotation. The chain is Flagellar motor switch protein FliM from Thermotoga maritima (strain ATCC 43589 / DSM 3109 / JCM 10099 / NBRC 100826 / MSB8).